Consider the following 249-residue polypeptide: DNA repair protein RecO (249 aa).

The protein belongs to the RecO family.

Its function is as follows. Involved in DNA repair and RecF pathway recombination. In Lawsonia intracellularis (strain PHE/MN1-00), this protein is DNA repair protein RecO.